A 611-amino-acid chain; its full sequence is Serine/arginine repetitive matrix protein 4 (611 aa).

Disordered regions lie at residues 38–248 (ARKP…PLQM) and 263–611 (SAAD…STRR). Basic residues-rich tracts occupy residues 107–123 (RGKK…RRRS) and 131–189 (VKKK…HRCP). Residues 190–202 (SRSQSSESRPSSC) show a composition bias toward low complexity. Over residues 203 to 216 (ESRHRGRSPEEGQK) the composition is skewed to basic and acidic residues. The segment covering 217–226 (SRRRHSRRCS) has biased composition (basic residues). Over residues 270-290 (KTASPLTTSRGRSQEYDSGND) the composition is skewed to polar residues. The segment covering 291–301 (TSSPPSTQTSS) has biased composition (low complexity). The segment covering 322-341 (LNSGNTSDSGNSFTTSSPQN) has biased composition (polar residues). 2 stretches are compositionally biased toward low complexity: residues 390–422 (SRSS…SRST) and 430–461 (SRSP…SRYS). Basic and acidic residues predominate over residues 462-482 (PSRERDPKYSEKDSQQRERER). Over residues 483–498 (ARRRRRSYSPMRKRRR) the composition is skewed to basic residues. Over residues 499-508 (DSPSHLEARR) the composition is skewed to basic and acidic residues. Positions 522-549 (PSPSSSGSLSSTSSWYSSSSSRSASRSY) are enriched in low complexity. A compositionally biased stretch (basic residues) spans 550 to 564 (SRSRSRSRSRRRSRT). Residues 565-580 (RTSSSSSSRSPSPGSR) are compositionally biased toward low complexity. Residues 581 to 595 (SRSRSRSRSRSRSRS) show a composition bias toward basic residues. A compositionally biased stretch (low complexity) spans 596-611 (QSRSYSSADSYSSTRR).

This sequence belongs to the nSR100 family. In terms of processing, phosphorylated. As to expression, specifically expressed in neuronal cells (at protein level). Expressed in the cerebellum.

It is found in the nucleus. Splicing factor specifically required for neural cell differentiation. Acts in conjunction with nPTB/PTBP2 by binding directly to its regulated target transcripts and promotes neural-specific exon inclusion in many genes that function in neural cell differentiation. Required to promote the inclusion of neural-specific exon 10 in nPTB/PTBP2, leading to increased expression of neural-specific nPTB/PTBP2. Also promotes the inclusion of exon 16 in DAAM1 in neuron extracts. Promotes alternative splicing of REST transcripts to produce REST isoform 3 (REST4) with greatly reduced repressive activity, thereby activating expression of REST targets in neural cells. Plays an important role during embryonic development as well as in the proper functioning of the adult nervous system. Regulates alternative splicing events in genes with important neuronal functions. The protein is Serine/arginine repetitive matrix protein 4 (SRRM4) of Homo sapiens (Human).